Reading from the N-terminus, the 44-residue chain is Protein PsbN (44 aa).

A helical membrane pass occupies residues 6–26 (FFFTIFLWCLLLSITGYSIYV).

Belongs to the PsbN family.

It is found in the plastid. The protein localises to the chloroplast thylakoid membrane. Its function is as follows. May play a role in photosystem I and II biogenesis. This chain is Protein PsbN, found in Chlorella vulgaris (Green alga).